A 52-amino-acid polypeptide reads, in one-letter code: Large ribosomal subunit protein bL32c (52 aa).

This sequence belongs to the bacterial ribosomal protein bL32 family.

It localises to the plastid. It is found in the chloroplast. In Arabis hirsuta (Hairy rock-cress), this protein is Large ribosomal subunit protein bL32c.